Here is a 212-residue protein sequence, read N- to C-terminus: MKKILLAFTLPLVLASQTAMADVTLKVPGNFEILAAQHLEIKKATKIVALPEGDQQVLVRFDSPTNPHSTGQSMGYVSSQPILIRFSANDGEVVKLVAPRVDTQQDVKRFAKNPSFELTDTAGKSVSFESEKLVVSGSPLMANYNDILAVQVAASTKQTLPQPAVITASSQSVSTVDINQLTPAQADQLMKDLYQNADKKSRKEFIRWALGL.

An N-terminal signal peptide occupies residues Met1 to Ala21.

Belongs to the UPF0319 family.

The chain is UPF0319 protein PBPRA2789 from Photobacterium profundum (strain SS9).